We begin with the raw amino-acid sequence, 642 residues long: Threonine--tRNA ligase (642 aa).

The TGS domain maps to 1–61 (MPVITLPDGS…ETDAELSIIT (61 aa)). The catalytic stretch occupies residues 243–534 (DHRKIGKQLD…LIEEYAGRFP (292 aa)). Residues cysteine 334, histidine 385, and histidine 511 each contribute to the Zn(2+) site.

It belongs to the class-II aminoacyl-tRNA synthetase family. In terms of assembly, homodimer. Requires Zn(2+) as cofactor.

The protein localises to the cytoplasm. It carries out the reaction tRNA(Thr) + L-threonine + ATP = L-threonyl-tRNA(Thr) + AMP + diphosphate + H(+). Its function is as follows. Catalyzes the attachment of threonine to tRNA(Thr) in a two-step reaction: L-threonine is first activated by ATP to form Thr-AMP and then transferred to the acceptor end of tRNA(Thr). Also edits incorrectly charged L-seryl-tRNA(Thr). The protein is Threonine--tRNA ligase of Shewanella sp. (strain W3-18-1).